The sequence spans 288 residues: MIKDIKNKFSKLMSSVTKTSSDLKTKRNDFKEDFDDSNIFEIRDLNFYYENGKKQALYDVNLDIKKNKVTSFIGPSGCGKSTFLRLLNRMNELLPNTTFDGDIYFEKQNIYSKKFSVLDLRIKVGMVFQKATPFPMSIYDNVAFALKNQGIKNKKILDETIEKSLRSAALWDEVKDNLNDIATDLSGGQQQRLCIARAIACKPSVLLMDEPTSALDPIATSKIEELIMELKEKYTIIIVTHSMAQAQRISDETVFFFQGKIIENGPTKNIFLKPKEKKTRDYINGRIG.

The 242-residue stretch at 42-283 (IRDLNFYYEN…PKEKKTRDYI (242 aa)) folds into the ABC transporter domain. 74-81 (GPSGCGKS) provides a ligand contact to ATP.

It belongs to the ABC transporter superfamily. Phosphate importer (TC 3.A.1.7) family. As to quaternary structure, the complex is composed of two ATP-binding proteins (PstB), two transmembrane proteins (PstC and PstA) and a solute-binding protein (PstS).

The protein localises to the cell membrane. It carries out the reaction phosphate(out) + ATP + H2O = ADP + 2 phosphate(in) + H(+). Functionally, part of the ABC transporter complex PstSACB involved in phosphate import. Responsible for energy coupling to the transport system. In Malacoplasma penetrans (strain HF-2) (Mycoplasma penetrans), this protein is Phosphate import ATP-binding protein PstB.